A 350-amino-acid chain; its full sequence is tRNA uridine(34) hydroxylase (350 aa).

One can recognise a Rhodanese domain in the interval 146 to 240 (DDPDAVFIDM…YARRAREQGL (95 aa)). Residue cysteine 200 is the Cysteine persulfide intermediate of the active site. A compositionally biased stretch (basic and acidic residues) spans 319 to 328 (RRRRAGRENG). Positions 319–350 (RRRRAGRENGNKIFNKSRGRLNSKLSIPDPAE) are disordered.

The protein belongs to the TrhO family.

It catalyses the reaction uridine(34) in tRNA + AH2 + O2 = 5-hydroxyuridine(34) in tRNA + A + H2O. Catalyzes oxygen-dependent 5-hydroxyuridine (ho5U) modification at position 34 in tRNAs. In Salmonella heidelberg (strain SL476), this protein is tRNA uridine(34) hydroxylase.